We begin with the raw amino-acid sequence, 269 residues long: Formamidopyrimidine-DNA glycosylase (269 aa).

The active-site Schiff-base intermediate with DNA is Pro2. Glu3 serves as the catalytic Proton donor. Lys57 (proton donor; for beta-elimination activity) is an active-site residue. Residues His90, Arg109, and Lys150 each coordinate DNA. The FPG-type zinc-finger motif lies at 235-269 (QVYGREGEPCRVCGTPILAGKHAQRRTYWCRRCQK). Arg259 functions as the Proton donor; for delta-elimination activity in the catalytic mechanism.

It belongs to the FPG family. In terms of assembly, monomer. It depends on Zn(2+) as a cofactor.

The enzyme catalyses Hydrolysis of DNA containing ring-opened 7-methylguanine residues, releasing 2,6-diamino-4-hydroxy-5-(N-methyl)formamidopyrimidine.. It catalyses the reaction 2'-deoxyribonucleotide-(2'-deoxyribose 5'-phosphate)-2'-deoxyribonucleotide-DNA = a 3'-end 2'-deoxyribonucleotide-(2,3-dehydro-2,3-deoxyribose 5'-phosphate)-DNA + a 5'-end 5'-phospho-2'-deoxyribonucleoside-DNA + H(+). Functionally, involved in base excision repair of DNA damaged by oxidation or by mutagenic agents. Acts as a DNA glycosylase that recognizes and removes damaged bases. Has a preference for oxidized purines, such as 7,8-dihydro-8-oxoguanine (8-oxoG). Has AP (apurinic/apyrimidinic) lyase activity and introduces nicks in the DNA strand. Cleaves the DNA backbone by beta-delta elimination to generate a single-strand break at the site of the removed base with both 3'- and 5'-phosphates. The polypeptide is Formamidopyrimidine-DNA glycosylase (Cronobacter sakazakii (strain ATCC BAA-894) (Enterobacter sakazakii)).